Consider the following 132-residue polypeptide: MKKHGHLNRDIARILASMGHTDSLVIADCGLPIPPGVECVDLSLKLGQPGFIETLDSILADFQCERAVFAIECRQHNPAVQDKAERMAQAGAALDFVSHEEFKQRCQAARAVIRTGECTPYANVILHSGVIF.

The Proton donor role is filled by His-20. Substrate contacts are provided by residues Asp-28, His-99, and 121 to 123; that span reads YAN.

The protein belongs to the RbsD / FucU family. RbsD subfamily. In terms of assembly, homodecamer.

The protein localises to the cytoplasm. It catalyses the reaction beta-D-ribopyranose = beta-D-ribofuranose. It functions in the pathway carbohydrate metabolism; D-ribose degradation; D-ribose 5-phosphate from beta-D-ribopyranose: step 1/2. In terms of biological role, catalyzes the interconversion of beta-pyran and beta-furan forms of D-ribose. This chain is D-ribose pyranase, found in Chromobacterium violaceum (strain ATCC 12472 / DSM 30191 / JCM 1249 / CCUG 213 / NBRC 12614 / NCIMB 9131 / NCTC 9757 / MK).